The primary structure comprises 584 residues: 2-succinyl-5-enolpyruvyl-6-hydroxy-3-cyclohexene-1-carboxylate synthase (584 aa).

Belongs to the TPP enzyme family. MenD subfamily. In terms of assembly, homodimer. Mg(2+) serves as cofactor. It depends on Mn(2+) as a cofactor. Requires thiamine diphosphate as cofactor.

It catalyses the reaction isochorismate + 2-oxoglutarate + H(+) = 5-enolpyruvoyl-6-hydroxy-2-succinyl-cyclohex-3-ene-1-carboxylate + CO2. The protein operates within quinol/quinone metabolism; 1,4-dihydroxy-2-naphthoate biosynthesis; 1,4-dihydroxy-2-naphthoate from chorismate: step 2/7. Its pathway is quinol/quinone metabolism; menaquinone biosynthesis. Its function is as follows. Catalyzes the thiamine diphosphate-dependent decarboxylation of 2-oxoglutarate and the subsequent addition of the resulting succinic semialdehyde-thiamine pyrophosphate anion to isochorismate to yield 2-succinyl-5-enolpyruvyl-6-hydroxy-3-cyclohexene-1-carboxylate (SEPHCHC). This is 2-succinyl-5-enolpyruvyl-6-hydroxy-3-cyclohexene-1-carboxylate synthase from Bacillus anthracis.